Here is a 354-residue protein sequence, read N- to C-terminus: RNA 3'-terminal phosphate cyclase (354 aa).

ATP is bound by residues glutamine 100 and 290–293 (HMGD). The Tele-AMP-histidine intermediate role is filled by histidine 316.

This sequence belongs to the RNA 3'-terminal cyclase family. Type 1 subfamily.

The protein resides in the cytoplasm. It catalyses the reaction a 3'-end 3'-phospho-ribonucleotide-RNA + ATP = a 3'-end 2',3'-cyclophospho-ribonucleotide-RNA + AMP + diphosphate. Catalyzes the conversion of 3'-phosphate to a 2',3'-cyclic phosphodiester at the end of RNA. The mechanism of action of the enzyme occurs in 3 steps: (A) adenylation of the enzyme by ATP; (B) transfer of adenylate to an RNA-N3'P to produce RNA-N3'PP5'A; (C) and attack of the adjacent 2'-hydroxyl on the 3'-phosphorus in the diester linkage to produce the cyclic end product. The biological role of this enzyme is unknown but it is likely to function in some aspects of cellular RNA processing. This chain is RNA 3'-terminal phosphate cyclase, found in Caldivirga maquilingensis (strain ATCC 700844 / DSM 13496 / JCM 10307 / IC-167).